The sequence spans 260 residues: 3'-5' ssDNA/RNA exonuclease TatD (260 aa).

Residues Glu92, His128, and His153 each contribute to the a divalent metal cation site.

This sequence belongs to the metallo-dependent hydrolases superfamily. TatD-type hydrolase family. TatD subfamily. In terms of assembly, monomer. Requires Mg(2+) as cofactor.

It localises to the cytoplasm. 3'-5' exonuclease that prefers single-stranded DNA and RNA. May play a role in the H(2)O(2)-induced DNA damage repair. This Pantoea sp. (strain At-9b) protein is 3'-5' ssDNA/RNA exonuclease TatD.